A 478-amino-acid chain; its full sequence is RNA-binding protein 42 (478 aa).

The span at 1 to 20 (MASAMAGAGPAPGLPVAGGP) shows a compositional bias: low complexity. A disordered region spans residues 1–33 (MASAMAGAGPAPGLPVAGGPVVPGPGVGIPGKS). N-acetylalanine is present on A2. Residue S133 is modified to Phosphoserine. 4 positions are modified to asymmetric dimethylarginine: R151, R156, R166, and R179. Disordered regions lie at residues 171–209 (LSSA…PPMA) and 317–354 (SLRP…PEKL). A compositionally biased stretch (pro residues) spans 193–205 (PPLPGPPGPPMML). Residues 234–478 (DLGLGLGLGL…QKEKKKLGLR (245 aa)) form a necessary for interaction with HNRNPK region. Over residues 343–354 (GEDKKKGKPEKL) the composition is skewed to basic and acidic residues. The region spanning 379–457 (FRIFCGDLGN…RPIKLRKSMW (79 aa)) is the RRM domain.

The protein belongs to the RRM RBM42 family. Interacts with HNRNPK.

The protein localises to the nucleus. Its subcellular location is the cytoplasm. In terms of biological role, binds (via the RRM domain) to the 3' untranslated region (UTR) of p21 mRNA. This Rattus norvegicus (Rat) protein is RNA-binding protein 42 (Rbm42).